A 215-amino-acid chain; its full sequence is MGGKWSKSSIVGWPAIRERMRRARPAADRVGTQPAADGVGAVSQDLARHGAVTSSNTSHNNPDCAWLEAQEEEEVGFPVRPQVPLRPMTYKAAFDLGFFLKEKGGLDGLIYSKKRQEILDLWVYHTQGFFPDWQNYTPGPGIRYPLTFGWCYKLVPVDPAEVEETTEGEDNCLLHPINQHGMEDEHREILMWKFDSSLARRHVARELHPDYYKDC.

Residue G2 is the site of N-myristoyl glycine; by host attachment. S6 is modified (phosphoserine; by host). Residues E71 to E74 form an acidic; interacts with host PACS1 and PACS2; stabilizes the interaction of NEF/MHC-I with host AP1M1; necessary for MHC-I internalization region. The segment at P78 to P87 is SH3-binding; interaction with Src family tyrosine kinases. The PxxP; stabilizes the interaction of NEF/MHC-I with host AP1M1; necessary for MHC-I internalization signature appears at P81–P84. Residues E117–W133 form a mediates dimerization, Nef-PTE1 interaction region. The segment at V157–I189 is binding to ATP6V1H. Positions L173–L174 match the Dileucine internalization motif; necessary for CD4 internalization motif. The Diacidic; necessary for CD4 internalization motif lies at E183–D184.

It belongs to the lentivirus primate group Nef protein family. As to quaternary structure, monomer; cytosolic form. Homodimer; membrane bound form. Interacts with Nef associated p21-activated kinase (PAK2); this interaction activates PAK2. Associates with the Nef-MHC-I-AP1 complex; this complex is required for MHC-I internalization. Interacts (via C-terminus) with host PI3-kinase. Interacts with host PACS1; this interaction seems to be weak. Interacts with host PACS2. Interacts with host LCK and MAPK3; these interactions inhibit the kinase activity of the latter. Interacts with host ATP6V1H; this interaction may play a role in CD4 endocytosis. Associates with the CD4-Nef-AP2 complex; this complex is required for CD4 internalization. Interacts with host AP2 subunit alpha and AP2 subunit sigma2. Interacts with TCR-zeta chain; this interaction up-regulates the Fas ligand (FasL) surface expression. Interacts with host HCK, LYN, and SRC; these interactions activate the Src family kinases. Interacts with MAP3K5; this interaction inhibits the Fas and TNFR-mediated death signals. Interacts with beta-COP and PTE1. Interacts with human RACK1; this increases Nef phosphorylation by PKC. Interacts with TP53; this interaction decreases the half-life of TP53, protecting the infected cell against p53-mediated apoptosis. Post-translationally, the virion-associated Nef proteins are cleaved by the viral protease to release the soluble C-terminal core protein. Nef is probably cleaved concomitantly with viral structural proteins on maturation of virus particles. Myristoylated. In terms of processing, phosphorylated on serine residues, probably by host PKCdelta and theta.

The protein localises to the host cell membrane. Its subcellular location is the virion. It is found in the secreted. The protein resides in the host Golgi apparatus membrane. Its function is as follows. Factor of infectivity and pathogenicity, required for optimal virus replication. Alters numerous pathways of T-lymphocyte function and down-regulates immunity surface molecules in order to evade host defense and increase viral infectivity. Alters the functionality of other immunity cells, like dendritic cells, monocytes/macrophages and NK cells. Functionally, in infected CD4(+) T-lymphocytes, down-regulates the surface MHC-I, mature MHC-II, CD4, CD28, CCR5 and CXCR4 molecules. Mediates internalization and degradation of host CD4 through the interaction of with the cytoplasmic tail of CD4, the recruitment of AP-2 (clathrin adapter protein complex 2), internalization through clathrin coated pits, and subsequent transport to endosomes and lysosomes for degradation. Diverts host MHC-I molecules to the trans-Golgi network-associated endosomal compartments by an endocytic pathway to finally target them for degradation. MHC-I down-regulation may involve AP-1 (clathrin adapter protein complex 1) or possibly Src family kinase-ZAP70/Syk-PI3K cascade recruited by PACS2. In consequence infected cells are masked for immune recognition by cytotoxic T-lymphocytes. Decreasing the number of immune receptors also prevents reinfection by more HIV particles (superinfection). Down-regulates host SERINC3 and SERINC5 thereby excluding these proteins from the viral particles. Virion infectivity is drastically higher when SERINC3 or SERINC5 are excluded from the viral envelope, because these host antiviral proteins impair the membrane fusion event necessary for subsequent virion penetration. Bypasses host T-cell signaling by inducing a transcriptional program nearly identical to that of anti-CD3 cell activation. Interaction with TCR-zeta chain up-regulates the Fas ligand (FasL). Increasing surface FasL molecules and decreasing surface MHC-I molecules on infected CD4(+) cells send attacking cytotoxic CD8+ T-lymphocytes into apoptosis. In terms of biological role, plays a role in optimizing the host cell environment for viral replication without causing cell death by apoptosis. Protects the infected cells from apoptosis in order to keep them alive until the next virus generation is ready to strike. Inhibits the Fas and TNFR-mediated death signals by blocking MAP3K5/ASK1. Decreases the half-life of TP53, protecting the infected cell against p53-mediated apoptosis. Inhibits the apoptotic signals regulated by the Bcl-2 family proteins through the formation of a Nef/PI3-kinase/PAK2 complex that leads to activation of PAK2 and induces phosphorylation of host BAD. Its function is as follows. Extracellular Nef protein targets CD4(+) T-lymphocytes for apoptosis by interacting with CXCR4 surface receptors. This is Protein Nef from Human immunodeficiency virus type 1 group M subtype K (isolate 96CM-MP535) (HIV-1).